We begin with the raw amino-acid sequence, 553 residues long: Dihydrolipoyllysine-residue acetyltransferase component of pyruvate dehydrogenase complex (553 aa).

Residues 4–78 form the Lipoyl-binding 1 domain; sequence AIEIKVPDIG…SEGSVLVMLE (75 aa). Lysine 44 carries the N6-lipoyllysine modification. Positions 97-118 are disordered; that stretch reads AAAAPAPAPAPAAAPAAAPAAG. Positions 122 to 196 constitute a Lipoyl-binding 2 domain; it reads TIEVKVPDIG…AEGTLLLILE (75 aa). Lysine 162 carries the N6-lipoyllysine modification. Positions 250-287 constitute a Peripheral subunit-binding (PSBD) domain; sequence HASPSVRKFARELGVDVSRVPGTGPKGRITQEDVQGYV. Histidine 526 is an active-site residue.

This sequence belongs to the 2-oxoacid dehydrogenase family. In terms of assembly, forms a 24-polypeptide structural core with octahedral symmetry. Requires (R)-lipoate as cofactor.

It carries out the reaction N(6)-[(R)-dihydrolipoyl]-L-lysyl-[protein] + acetyl-CoA = N(6)-[(R)-S(8)-acetyldihydrolipoyl]-L-lysyl-[protein] + CoA. The pyruvate dehydrogenase complex catalyzes the overall conversion of pyruvate to acetyl-CoA and CO(2). It contains multiple copies of three enzymatic components: pyruvate dehydrogenase (E1), dihydrolipoamide acetyltransferase (E2) and lipoamide dehydrogenase (E3). The sequence is that of Dihydrolipoyllysine-residue acetyltransferase component of pyruvate dehydrogenase complex (pdhB) from Cupriavidus necator (strain ATCC 17699 / DSM 428 / KCTC 22496 / NCIMB 10442 / H16 / Stanier 337) (Ralstonia eutropha).